The chain runs to 375 residues: Fructose-1,6-bisphosphate aldolase/phosphatase (375 aa).

Residue Asp15 is the Proton acceptor; for FBP phosphatase activity of the active site. 4 residues coordinate Mg(2+): Asp15, His22, Asp56, and Asp57. His22 is a binding site for beta-D-fructose 1,6-bisphosphate. His22 contacts dihydroxyacetone phosphate. Tyr94 contacts beta-D-fructose 1,6-bisphosphate. Mg(2+) is bound at residue Gln98. Gly107–Asn108 provides a ligand contact to beta-D-fructose 1,6-bisphosphate. Asp135 is a Mg(2+) binding site. Residue Lys136 coordinates beta-D-fructose 1,6-bisphosphate. Lys136 contributes to the dihydroxyacetone phosphate binding site. The Proton donor/acceptor; for FBP aldolase activity role is filled by Tyr237. Residues Lys240, Asp241, and Asp242 each coordinate Mg(2+). The active-site Schiff-base intermediate with DHAP; for FBP aldolase activity is Lys240. Beta-D-fructose 1,6-bisphosphate-binding positions include Gln250–Ser251, Arg274, Asp295, and Tyr357. Positions 274 and 295 each coordinate dihydroxyacetone phosphate.

This sequence belongs to the FBP aldolase/phosphatase family. In terms of assembly, homooctamer; dimer of tetramers. Mg(2+) serves as cofactor.

The catalysed reaction is beta-D-fructose 1,6-bisphosphate + H2O = beta-D-fructose 6-phosphate + phosphate. It carries out the reaction beta-D-fructose 1,6-bisphosphate = D-glyceraldehyde 3-phosphate + dihydroxyacetone phosphate. It participates in carbohydrate biosynthesis; gluconeogenesis. Activity is enhanced by dithioerythritol, and is slightly inhibited by fructose 2,6-bisphosphate. AMP does not inhibit the enzyme activity. In terms of biological role, catalyzes two subsequent steps in gluconeogenesis: the aldol condensation of dihydroxyacetone phosphate (DHAP) and glyceraldehyde-3-phosphate (GA3P) to fructose-1,6-bisphosphate (FBP), and the dephosphorylation of FBP to fructose-6-phosphate (F6P). Does not display hydrolase activity against fructose 2,6-bisphosphate, fructose 6-phosphate, fructose 1-phosphate, glucose 6-phosphate, and glucose 1-phosphate. Exhibits only negligible activity on inositol-1-phosphate (IMP). Is essential for the growth of T.kodakaraensis under gluconeogenic conditions. This is Fructose-1,6-bisphosphate aldolase/phosphatase from Thermococcus kodakarensis (strain ATCC BAA-918 / JCM 12380 / KOD1) (Pyrococcus kodakaraensis (strain KOD1)).